Reading from the N-terminus, the 354-residue chain is Peptide chain release factor 1 (354 aa).

Q230 is modified (N5-methylglutamine).

It belongs to the prokaryotic/mitochondrial release factor family. In terms of processing, methylated by PrmC. Methylation increases the termination efficiency of RF1.

It is found in the cytoplasm. In terms of biological role, peptide chain release factor 1 directs the termination of translation in response to the peptide chain termination codons UAG and UAA. The sequence is that of Peptide chain release factor 1 from Pelobacter propionicus (strain DSM 2379 / NBRC 103807 / OttBd1).